Here is a 330-residue protein sequence, read N- to C-terminus: PDZ and LIM domain protein 4 (330 aa).

A PDZ domain is found at 1–84; the sequence is MTHSVTLRGP…HLTLSVSRPE (84 aa). Disordered stretches follow at residues 104-153 and 219-242; these read DPES…SNEA and EAGEGGDRPGSGGPRNLKPAASKL. Phosphoserine is present on residues Ser107, Ser111, Ser115, Ser118, Ser119, Ser124, and Ser134. Positions 108–122 are enriched in polar residues; that stretch reads QDCSPATSRRSSVSG. The LIM zinc-binding domain maps to 255–305; it reads CTRCGHGIVGTIVKARDKLYHPECFMCSDCGLNLKQRGYFFLDERLYCENH.

Homodimer. Interacts (via C-terminus only or via combined C-terminus and LIM domain, but not LIM domain only) with PTPN13 (via the second or fourth PDZ domains). Found in a complex with PTPN13 and TRIP6. Interacts (via PDZ domain) with ACTN1 and ACTN2 (via C-terminal SDL residues). Interacts (via PDZ domain) with TRIP6 (via the second LIM domain or via the third LIM domain plus C-terminus). Interacts (via LIM domain) with GRIA1 (via C-terminus); this interaction as well as the interaction with alpha-actinin is required for their colocalization in early endosomes. Interacts with PDLIM1. Forms (via LIM domain) a heterodimer with PDLIM3. Interacts directly with SRC (via kinase domain and to a lesser extent the SH2 domain). Post-translationally, phosphorylated on tyrosine residue(s). Can be dephosphorylated by PTPN13. Expressed in several non-muscle tissues including lung, brain, ovary and uterus, and especially in epithelial cells at 14 dpc. In the uterus, high expression in the glandular epithelium, but absent in the simple columnar epithelium lining the uterus cavity.

It is found in the cytoplasm. It localises to the cytoskeleton. The protein resides in the cell projection. The protein localises to the dendritic spine. Its subcellular location is the early endosome membrane. It is found in the recycling endosome membrane. It localises to the nucleus. The protein resides in the perinuclear region. The protein localises to the lamellipodium. Its subcellular location is the synapse. It is found in the synaptosome. In terms of biological role, suppresses SRC activation by recognizing and binding to active SRC and facilitating PTPN13-mediated dephosphorylation of SRC 'Tyr-419' leading to its inactivation. Inactivated SRC dissociates from this protein allowing the initiation of a new SRC inactivation cycle. Involved in reorganization of the actin cytoskeleton. In nonmuscle cells, binds to ACTN1 (alpha-actinin-1), increases the affinity of ACTN1 to F-actin (filamentous actin), and promotes formation of actin stress fibers. Involved in regulation of the synaptic AMPA receptor transport in dendritic spines of hippocampal pyramidal neurons directing the receptors toward an insertion at the postsynaptic membrane. Links endosomal surface-internalized GRIA1-containing AMPA receptors to the alpha-actinin/actin cytoskeleton. Increases AMPA receptor-mediated excitatory postsynaptic currents in neurons. This Mus musculus (Mouse) protein is PDZ and LIM domain protein 4 (Pdlim4).